The following is a 371-amino-acid chain: Neuropeptide S receptor (371 aa).

Residues 1–52 (MPANLTEGSFHANQTVPMLDSSPVACTEIVTFTEALVAEEWGSFYSSFKTEQ) are Extracellular-facing. 2 N-linked (GlcNAc...) asparagine glycosylation sites follow: Asn4 and Asn13. Residues 53–73 (LITLWVLFVVTIVGNSVVLFS) form a helical membrane-spanning segment. The Cytoplasmic portion of the chain corresponds to 74 to 82 (TCRRKRKSR). Residues 83 to 103 (MTFFVTQLAITDSFTGLINIL) form a helical membrane-spanning segment. Over 104-123 (TDIIWRFTGDFMAPDLVCRV) the chain is Extracellular. Cys121 and Cys197 form a disulfide bridge. The chain crosses the membrane as a helical span at residues 124-144 (VRYLQVVLLYASTYVLVSLSI). Residues 145–164 (DRYHAIVYPMKFLQGEKQAK) lie on the Cytoplasmic side of the membrane. The helical transmembrane segment at 165-185 (VLIGIAWSLSFLFSIPTLIIF) threads the bilayer. Topologically, residues 186 to 212 (GKRTLSNGEVQCWALWPDDSYWTPYMT) are extracellular. Residues 213 to 233 (IVAFLVYFIPLAIISVIYGLV) form a helical membrane-spanning segment. Residues 234–275 (IRTIWMKSKTHETVISNCSDGKLCCSYNRGLISKAKIKAIKY) lie on the Cytoplasmic side of the membrane. A helical transmembrane segment spans residues 276–296 (SIVIILAFICCWSPYFLFDIL). At 297–312 (DNFNVLPDTKERFYAS) the chain is on the extracellular side. Residues 313-333 (VIIQNLPALNSAINPLIYCIF) traverse the membrane as a helical segment. The Cytoplasmic portion of the chain corresponds to 334–371 (SSSICSPCKMQRSQDSRMTYRERSERHEMQILSKPEFI).

Belongs to the G-protein coupled receptor 1 family. Vasopressin/oxytocin receptor subfamily.

The protein localises to the cell membrane. In terms of biological role, G-protein coupled receptor for neuropeptide S (NPS). Promotes mobilization of intracellular Ca(2+) stores. Inhibits cell growth in response to NPS binding. Involved in pathogenesis of asthma and other IgE-mediated diseases. This is Neuropeptide S receptor (Npsr1) from Mus musculus (Mouse).